We begin with the raw amino-acid sequence, 362 residues long: Serpentine receptor class delta-2 (362 aa).

Helical transmembrane passes span 27-47 (LSCL…YLIW), 57-77 (YAIY…ISFF), 104-124 (FCYF…WILL), 144-164 (LIRN…VYVF), 209-229 (LISI…ILYF), 264-284 (GIPI…FGII), and 292-312 (ITFR…IIFV).

It belongs to the nematode receptor-like protein srd family.

It localises to the membrane. In terms of biological role, thought to be a chemosensory receptor. This Caenorhabditis elegans protein is Serpentine receptor class delta-2 (srd-2).